Here is a 435-residue protein sequence, read N- to C-terminus: Glutamate-1-semialdehyde 2,1-aminomutase (435 aa).

An N6-(pyridoxal phosphate)lysine modification is found at lysine 266.

It belongs to the class-III pyridoxal-phosphate-dependent aminotransferase family. HemL subfamily. In terms of assembly, homodimer. Requires pyridoxal 5'-phosphate as cofactor.

The protein resides in the cytoplasm. It carries out the reaction (S)-4-amino-5-oxopentanoate = 5-aminolevulinate. The protein operates within porphyrin-containing compound metabolism; protoporphyrin-IX biosynthesis; 5-aminolevulinate from L-glutamyl-tRNA(Glu): step 2/2. The polypeptide is Glutamate-1-semialdehyde 2,1-aminomutase (Coxiella burnetii (strain Dugway 5J108-111)).